The sequence spans 538 residues: CWF19-like protein 1 (538 aa).

Residues 298-324 (QGRKRSSTGRDSKSSPHPKQPRKPPQP) form a disordered region.

The protein belongs to the CWF19 family. As to expression, expressed in many brain regions, including cerebellum, thalamus and occipital, parietal and temporal lobes (at protein level). Also expressed in the spinal cord (at protein level).

This chain is CWF19-like protein 1 (CWF19L1), found in Homo sapiens (Human).